The primary structure comprises 342 residues: Holliday junction branch migration complex subunit RuvB (342 aa).

A large ATPase domain (RuvB-L) region spans residues 1–181 (MEERFLTPKD…FGMVLELEFY (181 aa)). ATP is bound by residues L20, R21, G62, K65, T66, T67, 128–130 (EDF), R171, Y181, and R218. T66 lines the Mg(2+) pocket. The small ATPAse domain (RuvB-S) stretch occupies residues 182–252 (TPDELKQIIK…TVEDAMKIMG (71 aa)). The tract at residues 255–342 (AEGLDDMDRK…IGPLWDSTGD (88 aa)) is head domain (RuvB-H). DNA-binding residues include R310 and R315.

Belongs to the RuvB family. Homohexamer. Forms an RuvA(8)-RuvB(12)-Holliday junction (HJ) complex. HJ DNA is sandwiched between 2 RuvA tetramers; dsDNA enters through RuvA and exits via RuvB. An RuvB hexamer assembles on each DNA strand where it exits the tetramer. Each RuvB hexamer is contacted by two RuvA subunits (via domain III) on 2 adjacent RuvB subunits; this complex drives branch migration. In the full resolvosome a probable DNA-RuvA(4)-RuvB(12)-RuvC(2) complex forms which resolves the HJ.

It is found in the cytoplasm. It catalyses the reaction ATP + H2O = ADP + phosphate + H(+). Its function is as follows. The RuvA-RuvB-RuvC complex processes Holliday junction (HJ) DNA during genetic recombination and DNA repair, while the RuvA-RuvB complex plays an important role in the rescue of blocked DNA replication forks via replication fork reversal (RFR). RuvA specifically binds to HJ cruciform DNA, conferring on it an open structure. The RuvB hexamer acts as an ATP-dependent pump, pulling dsDNA into and through the RuvAB complex. RuvB forms 2 homohexamers on either side of HJ DNA bound by 1 or 2 RuvA tetramers; 4 subunits per hexamer contact DNA at a time. Coordinated motions by a converter formed by DNA-disengaged RuvB subunits stimulates ATP hydrolysis and nucleotide exchange. Immobilization of the converter enables RuvB to convert the ATP-contained energy into a lever motion, pulling 2 nucleotides of DNA out of the RuvA tetramer per ATP hydrolyzed, thus driving DNA branch migration. The RuvB motors rotate together with the DNA substrate, which together with the progressing nucleotide cycle form the mechanistic basis for DNA recombination by continuous HJ branch migration. Branch migration allows RuvC to scan DNA until it finds its consensus sequence, where it cleaves and resolves cruciform DNA. The sequence is that of Holliday junction branch migration complex subunit RuvB from Kosmotoga olearia (strain ATCC BAA-1733 / DSM 21960 / TBF 19.5.1).